Reading from the N-terminus, the 286-residue chain is ATP synthase gamma chain (286 aa).

This sequence belongs to the ATPase gamma chain family. As to quaternary structure, F-type ATPases have 2 components, CF(1) - the catalytic core - and CF(0) - the membrane proton channel. CF(1) has five subunits: alpha(3), beta(3), gamma(1), delta(1), epsilon(1). CF(0) has three main subunits: a, b and c.

It localises to the cell membrane. In terms of biological role, produces ATP from ADP in the presence of a proton gradient across the membrane. The gamma chain is believed to be important in regulating ATPase activity and the flow of protons through the CF(0) complex. In Ruminococcus albus (strain ATCC 27210 / DSM 20455 / JCM 14654 / NCDO 2250 / 7), this protein is ATP synthase gamma chain.